Reading from the N-terminus, the 267-residue chain is Urease accessory protein UreD (267 aa).

This sequence belongs to the UreD family. UreD, UreF and UreG form a complex that acts as a GTP-hydrolysis-dependent molecular chaperone, activating the urease apoprotein by helping to assemble the nickel containing metallocenter of UreC. The UreE protein probably delivers the nickel.

It localises to the cytoplasm. Its function is as follows. Required for maturation of urease via the functional incorporation of the urease nickel metallocenter. This Synechococcus sp. (strain JA-2-3B'a(2-13)) (Cyanobacteria bacterium Yellowstone B-Prime) protein is Urease accessory protein UreD.